Consider the following 819-residue polypeptide: Deubiquitinase MYSM1 (819 aa).

Residues 1–12 are compositionally biased toward acidic residues; it reads MEAEEADVDVEG. Positions 1 to 29 are disordered; sequence MEAEEADVDVEGDVAAAAQPGNDESTASV. Ser-107 carries the phosphoserine modification. The SANT domain maps to 113 to 164; the sequence is SHSVKWTVEEKELFEQGLAKFGRRWTKIATLLKSRTVLQVKSYARQYFKNKV. Residue Lys-184 forms a Glycyl lysine isopeptide (Lys-Gly) (interchain with G-Cter in SUMO2) linkage. Phosphoserine is present on Ser-215. Disordered regions lie at residues 228-247, 260-279, and 318-347; these read ELTS…DVPN, QEGP…KQGE, and LHRG…NEML. The segment covering 230–240 has biased composition (polar residues); the sequence is TSQTSQNSGSH. Thr-233 is subject to Phosphothreonine. Over residues 318–340 the composition is skewed to basic and acidic residues; sequence LHRGEVREEAKHSPSPEPCERQD. Ser-332 carries the phosphoserine modification. Positions 363–461 constitute an SWIRM domain; that stretch reads LKPPEQEVEI…FGCEQAVYNR (99 aa). Positions 568-700 constitute an MPN domain; that stretch reads VKVAAEALLI…PLPYSQITCL (133 aa). Zn(2+) is bound by residues His-647, His-649, and Asp-660. The JAMM motif signature appears at 647-660; it reads HSHPAFDPNPSLRD. An LXXLL motif motif is present at residues 765-769; sequence LQKLL.

Belongs to the peptidase M67A family. MYSM1 subfamily. In terms of assembly, component of a large chromatin remodeling complex, at least composed of MYSM1, PCAF, RBM10 and KIF11/TRIP5. Binds histones.

It localises to the nucleus. The protein localises to the cytoplasm. In terms of biological role, metalloprotease with deubiquitinase activity that plays important regulator roles in hematopoietic stem cell function, blood cell production and immune response. Participates in the normal programming of B-cell responses to antigen after the maturation process. Within the cytoplasm, plays critical roles in the repression of innate immunity and autoimmunity. Removes 'Lys-63'-linked polyubiquitins from TRAF3 and TRAF6 complexes. Attenuates NOD2-mediated inflammation and tissue injury by promoting 'Lys-63'-linked deubiquitination of RIPK2 component. Suppresses the CGAS-STING1 signaling pathway by cleaving STING1 'Lys-63'-linked ubiquitin chains. In the nucleus, acts as a hematopoietic transcription regulator derepressing a range of genes essential for normal stem cell differentiation including EBF1 and PAX5 in B-cells, ID2 in NK-cell progenitor or FLT3 in dendritic cell precursors. Deubiquitinates monoubiquitinated histone H2A, a specific tag for epigenetic transcriptional repression, leading to dissociation of histone H1 from the nucleosome. This Mus musculus (Mouse) protein is Deubiquitinase MYSM1 (Mysm1).